The chain runs to 105 residues: Replication restart protein PriB (105 aa).

The region spanning 1–102 (MTANRLTLSG…LHAEQIELID (102 aa)) is the SSB domain.

The protein belongs to the PriB family. Homodimer. Interacts with PriA and DnaT. Component of the replication restart primosome. Primosome assembly occurs via a 'hand-off' mechanism. PriA binds to replication forks, subsequently PriB then DnaT bind; DnaT then displaces ssDNA to generate the helicase loading substrate.

Its function is as follows. Involved in the restart of stalled replication forks, which reloads the replicative helicase on sites other than the origin of replication; the PriA-PriB pathway is the major replication restart pathway. During primosome assembly it facilitates complex formation between PriA and DnaT on DNA; stabilizes PriA on DNA. Stimulates the DNA unwinding activity of PriA helicase. The polypeptide is Replication restart protein PriB (Erwinia tasmaniensis (strain DSM 17950 / CFBP 7177 / CIP 109463 / NCPPB 4357 / Et1/99)).